The primary structure comprises 692 residues: Elongation factor G (692 aa).

In terms of domain architecture, tr-type G spans 8–282 (ENTRNIGIMA…AVIDYLPSPL (275 aa)). GTP contacts are provided by residues 17-24 (AHIDAGKT), 81-85 (DTPGH), and 135-138 (NKMD).

This sequence belongs to the TRAFAC class translation factor GTPase superfamily. Classic translation factor GTPase family. EF-G/EF-2 subfamily.

It is found in the cytoplasm. In terms of biological role, catalyzes the GTP-dependent ribosomal translocation step during translation elongation. During this step, the ribosome changes from the pre-translocational (PRE) to the post-translocational (POST) state as the newly formed A-site-bound peptidyl-tRNA and P-site-bound deacylated tRNA move to the P and E sites, respectively. Catalyzes the coordinated movement of the two tRNA molecules, the mRNA and conformational changes in the ribosome. This is Elongation factor G from Bacillus cytotoxicus (strain DSM 22905 / CIP 110041 / 391-98 / NVH 391-98).